We begin with the raw amino-acid sequence, 123 residues long: UPF0295 protein Bcer98_0460 (123 aa).

The next 2 helical transmembrane spans lie at 12-32 (IRTF…LGVF) and 43-63 (FMML…WIGM).

It belongs to the UPF0295 family.

It localises to the cell membrane. In Bacillus cytotoxicus (strain DSM 22905 / CIP 110041 / 391-98 / NVH 391-98), this protein is UPF0295 protein Bcer98_0460.